The following is a 228-amino-acid chain: 5'-methylthioadenosine/S-adenosylhomocysteine nucleosidase (228 aa).

Glu-11 serves as the catalytic Proton acceptor. Substrate-binding positions include Gly-77, Ile-151, and 172–173; that span reads ME. Asp-196 functions as the Proton donor in the catalytic mechanism.

This sequence belongs to the PNP/UDP phosphorylase family. MtnN subfamily.

The enzyme catalyses S-adenosyl-L-homocysteine + H2O = S-(5-deoxy-D-ribos-5-yl)-L-homocysteine + adenine. It carries out the reaction S-methyl-5'-thioadenosine + H2O = 5-(methylsulfanyl)-D-ribose + adenine. It catalyses the reaction 5'-deoxyadenosine + H2O = 5-deoxy-D-ribose + adenine. It functions in the pathway amino-acid biosynthesis; L-methionine biosynthesis via salvage pathway; S-methyl-5-thio-alpha-D-ribose 1-phosphate from S-methyl-5'-thioadenosine (hydrolase route): step 1/2. Its function is as follows. Catalyzes the irreversible cleavage of the glycosidic bond in both 5'-methylthioadenosine (MTA) and S-adenosylhomocysteine (SAH/AdoHcy) to adenine and the corresponding thioribose, 5'-methylthioribose and S-ribosylhomocysteine, respectively. Also cleaves 5'-deoxyadenosine, a toxic by-product of radical S-adenosylmethionine (SAM) enzymes, into 5-deoxyribose and adenine. The chain is 5'-methylthioadenosine/S-adenosylhomocysteine nucleosidase from Staphylococcus aureus (strain bovine RF122 / ET3-1).